Consider the following 480-residue polypeptide: UDP-N-acetylmuramate--L-alanine ligase (480 aa).

Residue 129-135 (GTHGKTT) participates in ATP binding.

It belongs to the MurCDEF family.

The protein resides in the cytoplasm. The catalysed reaction is UDP-N-acetyl-alpha-D-muramate + L-alanine + ATP = UDP-N-acetyl-alpha-D-muramoyl-L-alanine + ADP + phosphate + H(+). It participates in cell wall biogenesis; peptidoglycan biosynthesis. In terms of biological role, cell wall formation. The sequence is that of UDP-N-acetylmuramate--L-alanine ligase from Mannheimia succiniciproducens (strain KCTC 0769BP / MBEL55E).